A 216-amino-acid chain; its full sequence is Putative transmembrane protein RNF32-DT (216 aa).

A helical transmembrane segment spans residues 177–197 (WIPLLLVAGCVSCFVGLAVCV).

In terms of tissue distribution, expressed only in testis.

It is found in the cytoplasm. The protein resides in the membrane. This Homo sapiens (Human) protein is Putative transmembrane protein RNF32-DT.